The following is a 178-amino-acid chain: ATP-dependent protease subunit HslV (178 aa).

Thr8 is an active-site residue. Na(+) contacts are provided by Gly163, Cys166, and Thr169.

The protein belongs to the peptidase T1B family. HslV subfamily. In terms of assembly, a double ring-shaped homohexamer of HslV is capped on each side by a ring-shaped HslU homohexamer. The assembly of the HslU/HslV complex is dependent on binding of ATP.

It localises to the cytoplasm. It catalyses the reaction ATP-dependent cleavage of peptide bonds with broad specificity.. With respect to regulation, allosterically activated by HslU binding. Functionally, protease subunit of a proteasome-like degradation complex believed to be a general protein degrading machinery. The protein is ATP-dependent protease subunit HslV of Xylella fastidiosa (strain 9a5c).